Consider the following 105-residue polypeptide: Late embryogenesis abundant protein Lea5-A (105 aa).

This sequence belongs to the LEA type 3 family.

In Gossypium hirsutum (Upland cotton), this protein is Late embryogenesis abundant protein Lea5-A (LEA5-A).